Consider the following 101-residue polypeptide: Aspartyl/glutamyl-tRNA(Asn/Gln) amidotransferase subunit C (101 aa).

This sequence belongs to the GatC family. Heterotrimer of A, B and C subunits.

The enzyme catalyses L-glutamyl-tRNA(Gln) + L-glutamine + ATP + H2O = L-glutaminyl-tRNA(Gln) + L-glutamate + ADP + phosphate + H(+). The catalysed reaction is L-aspartyl-tRNA(Asn) + L-glutamine + ATP + H2O = L-asparaginyl-tRNA(Asn) + L-glutamate + ADP + phosphate + 2 H(+). Allows the formation of correctly charged Asn-tRNA(Asn) or Gln-tRNA(Gln) through the transamidation of misacylated Asp-tRNA(Asn) or Glu-tRNA(Gln) in organisms which lack either or both of asparaginyl-tRNA or glutaminyl-tRNA synthetases. The reaction takes place in the presence of glutamine and ATP through an activated phospho-Asp-tRNA(Asn) or phospho-Glu-tRNA(Gln). The chain is Aspartyl/glutamyl-tRNA(Asn/Gln) amidotransferase subunit C from Lactococcus lactis subsp. cremoris (strain SK11).